The chain runs to 245 residues: Carboxymethylenebutenolidase homolog (245 aa).

Alanine 2 carries the N-acetylalanine modification. Active-site residues include cysteine 132, aspartate 179, and histidine 212. Serine 223 is subject to Phosphoserine.

Belongs to the dienelactone hydrolase family.

The protein resides in the cytoplasm. It is found in the cytosol. Cysteine hydrolase. The polypeptide is Carboxymethylenebutenolidase homolog (Cmbl) (Mus musculus (Mouse)).